The sequence spans 266 residues: DNA damage-regulated autophagy modulator protein 2 (266 aa).

Transmembrane regions (helical) follow at residues 8 to 28, 53 to 73, 92 to 112, 117 to 137, 160 to 180, and 207 to 227; these read LSFL…FSYI, KCLF…TIYV, NKAG…VANF, FFAV…LYMF, LLLV…SSLL, and ITTA…LTYI.

It belongs to the DRAM/TMEM150 family.

Its subcellular location is the lysosome membrane. It localises to the photoreceptor inner segment. It is found in the apical cell membrane. In terms of biological role, plays a role in the initiation of autophagy. In the retina, might be involved in the process of photoreceptor cells renewal and recycling to preserve visual function. Induces apoptotic cell death when coexpressed with DRAM1. The protein is DNA damage-regulated autophagy modulator protein 2 (DRAM2) of Bos taurus (Bovine).